A 463-amino-acid chain; its full sequence is Putative glycine--tRNA ligase, cytoplasmic (463 aa).

A disordered region spans residues 25–54 (TLEDSHAAKPETNAAIELPNKSKPEKSAVE). The span at 44-54 (NKSKPEKSAVE) shows a compositional bias: basic and acidic residues. R153 and E239 together coordinate substrate. Residues 271 to 273 (RNE) and 281 to 286 (LRTREF) contribute to the ATP site. Residues 286-290 (FTLAE) and N376 each bind substrate. 398–399 (EC) serves as a coordination point for ATP.

Belongs to the class-II aminoacyl-tRNA synthetase family. As to quaternary structure, homodimer.

It localises to the cytoplasm. The catalysed reaction is tRNA(Gly) + glycine + ATP = glycyl-tRNA(Gly) + AMP + diphosphate. Functionally, catalyzes the attachment of glycine to tRNA(Gly). Is also able produce diadenosine tetraphosphate (Ap4A), a universal pleiotropic signaling molecule needed for cell regulation pathways, by direct condensation of 2 ATPs. This chain is Putative glycine--tRNA ligase, cytoplasmic, found in Arabidopsis thaliana (Mouse-ear cress).